We begin with the raw amino-acid sequence, 313 residues long: Protein PALE CRESS, chloroplastic (313 aa).

The transit peptide at 1 to 22 directs the protein to the chloroplast; the sequence is MAATSLVLTCASPLFSSPRVIS.

As to expression, expressed in green tissues, including leaves. Accumulates in chloroplasts of mature stomatal guard cells.

The protein localises to the plastid. It is found in the chloroplast. Its subcellular location is the chromoplast. It localises to the etioplast. The protein resides in the amyloplast. In terms of biological role, required for the differentiation of chloroplast from proplastids or etioplasts, probably by modulating some chloroplast-encoded genes expression and mRNA maturation. Involved in leaf-cells differentiation. The protein is Protein PALE CRESS, chloroplastic (PAC) of Arabidopsis thaliana (Mouse-ear cress).